A 270-amino-acid polypeptide reads, in one-letter code: MIOREX complex component 3 (270 aa).

The transit peptide at 1-12 directs the protein to the mitochondrion; sequence MSRTIPFLFKLV.

Associates with the mitochondrial ribosome.

It is found in the mitochondrion. Component of MIOREX complexes, large expressome-like assemblies of ribosomes with factors involved in all the steps of post-transcriptional gene expression. In Saccharomyces cerevisiae (strain ATCC 204508 / S288c) (Baker's yeast), this protein is MIOREX complex component 3.